A 72-amino-acid polypeptide reads, in one-letter code: Caerin-regulated peptide (72 aa).

The N-terminal stretch at 1-22 (MAFLKKSLLLVLFLGLVSLSIC) is a signal peptide. A propeptide spanning residues 23–43 (DEEKRENEDEEEQEDDEQSEE) is cleaved from the precursor. Positions 24 to 46 (EEKRENEDEEEQEDDEQSEEKRG) are disordered. The segment covering 30–41 (EDEEEQEDDEQS) has biased composition (acidic residues).

In terms of tissue distribution, expressed by the skin glands.

The protein localises to the secreted. Its function is as follows. Has antibacterial activity against Gram-positive bacterium M.luteus NCT C2665 and against Gram-negative bacterium E.coli K12D31. The sequence is that of Caerin-regulated peptide from Agalychnis callidryas (Red-eyed tree frog).